Here is a 480-residue protein sequence, read N- to C-terminus: Proline--tRNA ligase (480 aa).

The protein belongs to the class-II aminoacyl-tRNA synthetase family. ProS type 3 subfamily. As to quaternary structure, homodimer.

The protein localises to the cytoplasm. The catalysed reaction is tRNA(Pro) + L-proline + ATP = L-prolyl-tRNA(Pro) + AMP + diphosphate. Functionally, catalyzes the attachment of proline to tRNA(Pro) in a two-step reaction: proline is first activated by ATP to form Pro-AMP and then transferred to the acceptor end of tRNA(Pro). The sequence is that of Proline--tRNA ligase from Alkaliphilus oremlandii (strain OhILAs) (Clostridium oremlandii (strain OhILAs)).